We begin with the raw amino-acid sequence, 272 residues long: Anamorsin homolog (272 aa).

The N-terminal SAM-like domain stretch occupies residues 1–156; the sequence is MDSMMNQKTV…KIGSSFALKK (156 aa). The interval 157 to 185 is linker; sequence PVTNLFKIDLDDDVDLIDEDSLLTEEDLM. 4 residues coordinate [2Fe-2S] cluster: Cys-195, Cys-202, Cys-205, and Cys-207. The tract at residues 195–207 is fe-S binding site A; that stretch reads CETTKKACKNCVC. [4Fe-4S] cluster contacts are provided by Cys-233, Cys-236, Cys-244, and Cys-247. 2 consecutive short sequence motifs (cx2C motif) follow at residues 233-236 and 244-247; these read CGSC and CGTC. A fe-S binding site B region spans residues 233–247; that stretch reads CGSCGLGDAFRCGTC.

The protein belongs to the anamorsin family. In terms of assembly, monomer. Interacts with ATR3. Requires [2Fe-2S] cluster as cofactor. [4Fe-4S] cluster is required as a cofactor.

The protein localises to the cytoplasm. It is found in the mitochondrion intermembrane space. Functionally, component of the cytosolic iron-sulfur (Fe-S) protein assembly (CIA) machinery. Required for the maturation of extramitochondrial Fe-S proteins. Part of an electron transfer chain functioning in an early step of cytosolic Fe-S biogenesis, facilitating the de novo assembly of a [4Fe-4S] cluster on the cytosolic Fe-S scaffold complex. Electrons are transferred from NADPH via FAD- and FMN-containing diflavin oxidoreductase TAH18/ATR3. Together with the diflavin oxidoreductase, also required for the assembly of the diferric tyrosyl radical cofactor of ribonucleotide reductase (RNR), probably by providing electrons for reduction during radical cofactor maturation in the catalytic small subunit. Required for embryo development. This Arabidopsis thaliana (Mouse-ear cress) protein is Anamorsin homolog.